A 467-amino-acid polypeptide reads, in one-letter code: MKNFMDEKFMLSTKVAEDLYNDFAKDMPIIDYHCHISPQEICENKSFKNITEVWLYGDHYKWRLMRSSGVDEKYITGDSSDYEKFLAYVKAIETAIGNPLYHWSHLELQRYFGVYEVISEKNAPVIWEKANKVLNDGLTVREIIKKSNVKAICTTDDPIDSLEYHLKLKEDTSFNVKVLPAFRPDKALGINKDGYTDWVSKLAKVSKKNINSYDMFLEALNDRIEFFHSVGGRVSDHALDYVPYLEASKEEVNTIFAKALKGEKVSFEEETKFRTFTMKFLGKKYASLGWAMELHMNAKRDNNTRMYNKLGPDTGFDSVNDNGVAGPLSRFLDSLEKEGSLPKTIIYSLNPNDNFVIGTLLGCFQGTEAFGKIQFGAAWWFNDHRDGMVEQMETLANLGAFSTFIGMLTDSRSFLSYTRHEYFRRILCDLIGKWVENGEVPNDMELLGRITKNICFNNANNYFEMGL.

This sequence belongs to the metallo-dependent hydrolases superfamily. Uronate isomerase family.

It carries out the reaction D-glucuronate = D-fructuronate. The enzyme catalyses aldehydo-D-galacturonate = keto-D-tagaturonate. It functions in the pathway carbohydrate metabolism; pentose and glucuronate interconversion. This chain is Uronate isomerase, found in Clostridium acetobutylicum (strain ATCC 824 / DSM 792 / JCM 1419 / IAM 19013 / LMG 5710 / NBRC 13948 / NRRL B-527 / VKM B-1787 / 2291 / W).